We begin with the raw amino-acid sequence, 421 residues long: UPF0229 protein lpp2857 (421 aa).

The segment at 83–110 is disordered; sequence IAGDRIKRPSGGGAGGAGGNASDSGEGE. The span at 92-101 shows a compositional bias: gly residues; sequence SGGGAGGAGG.

This sequence belongs to the UPF0229 family.

The sequence is that of UPF0229 protein lpp2857 from Legionella pneumophila (strain Paris).